The following is a 401-amino-acid chain: 4-hydroxy-3-methylbut-2-enyl diphosphate reductase (401 aa).

C66 provides a ligand contact to [4Fe-4S] cluster. H96 contributes to the (2E)-4-hydroxy-3-methylbut-2-enyl diphosphate binding site. H96 is a binding site for dimethylallyl diphosphate. H96 is an isopentenyl diphosphate binding site. C157 is a [4Fe-4S] cluster binding site. A (2E)-4-hydroxy-3-methylbut-2-enyl diphosphate-binding site is contributed by H185. Position 185 (H185) interacts with dimethylallyl diphosphate. An isopentenyl diphosphate-binding site is contributed by H185. E187 acts as the Proton donor in catalysis. T250 is a binding site for (2E)-4-hydroxy-3-methylbut-2-enyl diphosphate. C288 provides a ligand contact to [4Fe-4S] cluster. S317, S318, N319, and S381 together coordinate (2E)-4-hydroxy-3-methylbut-2-enyl diphosphate. Residues S317, S318, N319, and S381 each coordinate dimethylallyl diphosphate. Residues S317, S318, N319, and S381 each contribute to the isopentenyl diphosphate site.

This sequence belongs to the IspH family. The cofactor is [4Fe-4S] cluster.

The enzyme catalyses isopentenyl diphosphate + 2 oxidized [2Fe-2S]-[ferredoxin] + H2O = (2E)-4-hydroxy-3-methylbut-2-enyl diphosphate + 2 reduced [2Fe-2S]-[ferredoxin] + 2 H(+). It catalyses the reaction dimethylallyl diphosphate + 2 oxidized [2Fe-2S]-[ferredoxin] + H2O = (2E)-4-hydroxy-3-methylbut-2-enyl diphosphate + 2 reduced [2Fe-2S]-[ferredoxin] + 2 H(+). It functions in the pathway isoprenoid biosynthesis; dimethylallyl diphosphate biosynthesis; dimethylallyl diphosphate from (2E)-4-hydroxy-3-methylbutenyl diphosphate: step 1/1. The protein operates within isoprenoid biosynthesis; isopentenyl diphosphate biosynthesis via DXP pathway; isopentenyl diphosphate from 1-deoxy-D-xylulose 5-phosphate: step 6/6. In terms of biological role, catalyzes the conversion of 1-hydroxy-2-methyl-2-(E)-butenyl 4-diphosphate (HMBPP) into a mixture of isopentenyl diphosphate (IPP) and dimethylallyl diphosphate (DMAPP). Acts in the terminal step of the DOXP/MEP pathway for isoprenoid precursor biosynthesis. In Prochlorococcus marinus (strain NATL1A), this protein is 4-hydroxy-3-methylbut-2-enyl diphosphate reductase.